We begin with the raw amino-acid sequence, 469 residues long: Uridine kinase-like protein 4 (469 aa).

The interval 46-249 (QRQPFVIGVA…IVQHICTKLG (204 aa)) is uridine kinase. The tract at residues 259–469 (NLYVIHSTFQ…GDRYFGTDDD (211 aa)) is uracil phosphoribosyltransferase. GTP contacts are provided by residues Lys283, Arg292, and 326-329 (CKRL). 5-phospho-alpha-D-ribose 1-diphosphate contacts are provided by Arg336 and Arg361. Residue Arg381 coordinates GTP. Residues Asp387, 392-395 (TGNS), and Glu458 each bind 5-phospho-alpha-D-ribose 1-diphosphate. Residue 457–459 (GEF) coordinates uracil.

This sequence in the N-terminal section; belongs to the uridine kinase family. The protein in the C-terminal section; belongs to the UPRTase family. The cofactor is Mg(2+).

The catalysed reaction is UMP + diphosphate = 5-phospho-alpha-D-ribose 1-diphosphate + uracil. It carries out the reaction cytidine + ATP = CMP + ADP + H(+). The enzyme catalyses uridine + ATP = UMP + ADP + H(+). It functions in the pathway pyrimidine metabolism; UMP biosynthesis via salvage pathway; UMP from uracil: step 1/1. Its pathway is pyrimidine metabolism; CTP biosynthesis via salvage pathway; CTP from cytidine: step 1/3. The protein operates within pyrimidine metabolism; UMP biosynthesis via salvage pathway; UMP from uridine: step 1/1. Allosterically activated by GTP. In terms of biological role, involved in the pyrimidine salvage pathway. The uracil phosphoribosyltransferase (UPRT) activity, that catalyzes the conversion of uracil and 5-phospho-alpha-D-ribose 1-diphosphate (PRPP) to UMP and diphosphate, is unsure. The sequence is that of Uridine kinase-like protein 4 (UKL4) from Arabidopsis thaliana (Mouse-ear cress).